We begin with the raw amino-acid sequence, 164 residues long: UPF0304 protein MS2240 (164 aa).

This sequence belongs to the UPF0304 family.

The chain is UPF0304 protein MS2240 from Mannheimia succiniciproducens (strain KCTC 0769BP / MBEL55E).